A 128-amino-acid chain; its full sequence is Ribonuclease P protein component (128 aa).

This sequence belongs to the RnpA family. Consists of a catalytic RNA component (M1 or rnpB) and a protein subunit.

It carries out the reaction Endonucleolytic cleavage of RNA, removing 5'-extranucleotides from tRNA precursor.. RNaseP catalyzes the removal of the 5'-leader sequence from pre-tRNA to produce the mature 5'-terminus. It can also cleave other RNA substrates such as 4.5S RNA. The protein component plays an auxiliary but essential role in vivo by binding to the 5'-leader sequence and broadening the substrate specificity of the ribozyme. The polypeptide is Ribonuclease P protein component (Prochlorococcus marinus (strain AS9601)).